A 224-amino-acid chain; its full sequence is Urease accessory protein UreF (224 aa).

This sequence belongs to the UreF family. In terms of assembly, ureD, UreF and UreG form a complex that acts as a GTP-hydrolysis-dependent molecular chaperone, activating the urease apoprotein by helping to assemble the nickel containing metallocenter of UreC. The UreE protein probably delivers the nickel.

It localises to the cytoplasm. Required for maturation of urease via the functional incorporation of the urease nickel metallocenter. This Pseudomonas putida (strain W619) protein is Urease accessory protein UreF.